A 130-amino-acid chain; its full sequence is Small ribosomal subunit protein uS9 (130 aa).

Positions 109-130 are disordered; sequence RMKERKKYGLKAARRAPQFSKR. The span at 111–130 shows a compositional bias: basic residues; the sequence is KERKKYGLKAARRAPQFSKR.

The protein belongs to the universal ribosomal protein uS9 family.

This is Small ribosomal subunit protein uS9 from Lachnoclostridium phytofermentans (strain ATCC 700394 / DSM 18823 / ISDg) (Clostridium phytofermentans).